Reading from the N-terminus, the 289-residue chain is ATP synthase subunit a (289 aa).

Helical transmembrane passes span 43–63 (AFHL…LLIF), 104–124 (IAPL…VDLI), 160–180 (FCVF…GGFI), 193–213 (IFVQ…TLIA), 232–252 (VFIL…GLGV), and 259–279 (AVFH…LTIV).

It belongs to the ATPase A chain family. As to quaternary structure, F-type ATPases have 2 components, CF(1) - the catalytic core - and CF(0) - the membrane proton channel. CF(1) has five subunits: alpha(3), beta(3), gamma(1), delta(1), epsilon(1). CF(0) has three main subunits: a(1), b(2) and c(9-12). The alpha and beta chains form an alternating ring which encloses part of the gamma chain. CF(1) is attached to CF(0) by a central stalk formed by the gamma and epsilon chains, while a peripheral stalk is formed by the delta and b chains.

Its subcellular location is the cell inner membrane. Its function is as follows. Key component of the proton channel; it plays a direct role in the translocation of protons across the membrane. This chain is ATP synthase subunit a, found in Pseudomonas putida (strain ATCC 47054 / DSM 6125 / CFBP 8728 / NCIMB 11950 / KT2440).